The sequence spans 233 residues: Large ribosomal subunit protein uL1 (233 aa).

The protein belongs to the universal ribosomal protein uL1 family. As to quaternary structure, part of the 50S ribosomal subunit.

Its function is as follows. Binds directly to 23S rRNA. The L1 stalk is quite mobile in the ribosome, and is involved in E site tRNA release. Protein L1 is also a translational repressor protein, it controls the translation of the L11 operon by binding to its mRNA. The chain is Large ribosomal subunit protein uL1 from Geobacillus kaustophilus (strain HTA426).